The primary structure comprises 321 residues: uncharacterized protein (321 aa).

A signal peptide spans 1-18 (MKKMKKLLLLLSASFAFS).

This is an uncharacterized protein from Aquifex aeolicus (strain VF5).